A 437-amino-acid polypeptide reads, in one-letter code: GTPase Der (437 aa).

2 consecutive EngA-type G domains span residues P3–E168 and I178–R353. GTP is bound by residues G9–S16, D56–Y60, N120–D123, G184–S191, D231–L235, and N296–D299. Residues Q354–K437 form the KH-like domain.

This sequence belongs to the TRAFAC class TrmE-Era-EngA-EngB-Septin-like GTPase superfamily. EngA (Der) GTPase family. In terms of assembly, associates with the 50S ribosomal subunit.

In terms of biological role, GTPase that plays an essential role in the late steps of ribosome biogenesis. This Chlorobaculum tepidum (strain ATCC 49652 / DSM 12025 / NBRC 103806 / TLS) (Chlorobium tepidum) protein is GTPase Der.